The following is a 384-amino-acid chain: 3,7-dimethylxanthine N-methyltransferase 2 (384 aa).

The S-adenosyl-L-homocysteine site is built by tyrosine 18, cysteine 61, asparagine 66, aspartate 100, leucine 101, serine 139, phenylalanine 140, and cysteine 156. Residue tyrosine 157 participates in theobromine binding. Cysteine 158 serves as a coordination point for S-adenosyl-L-homocysteine. Theobromine contacts are provided by histidine 160 and tryptophan 161. Asparagine 178 is a Mg(2+) binding site. Residue serine 237 coordinates theobromine. Mg(2+)-binding residues include aspartate 260, phenylalanine 262, and asparagine 263. Tyrosine 368 serves as a coordination point for theobromine.

The protein belongs to the methyltransferase superfamily. Type-7 methyltransferase family. Requires Mg(2+) as cofactor. In terms of tissue distribution, highly expressed in developing endosperm. Detected in young leaves and flower buds. Present in immature fruits (grains), but barely in mature fruits.

The catalysed reaction is 7-methylxanthine + S-adenosyl-L-methionine = theobromine + S-adenosyl-L-homocysteine + H(+). It carries out the reaction theobromine + S-adenosyl-L-methionine = caffeine + S-adenosyl-L-homocysteine + H(+). It catalyses the reaction 1,7-dimethylxanthine + S-adenosyl-L-methionine = caffeine + S-adenosyl-L-homocysteine + H(+). It functions in the pathway alkaloid biosynthesis. Its function is as follows. Involved in the biosynthesis of caffeine. Catalyzes the conversion of 7-methylxanthine (7mX) to theobromine and of theobromine to caffeine. Has 1-N-methylation activity. The protein is 3,7-dimethylxanthine N-methyltransferase 2 of Coffea arabica (Arabian coffee).